The primary structure comprises 250 residues: MSQAAETLDGWYSLHLFYAVDWASLRLVPKDERDALVTEFQSFLENTATVRSSKSGDQAIYNITGQKADLLLWFLRPEMKSLNHIENEFNKLRIADFLIPTYSYVSVIELSNYLAGKSDEDPYENPHIKARLYPELPHSDYICFYPMNKRRNETYNWYMLTMEERQKLMYDHGMIGRKYAGKIKQFITGSVGFDDFEWGVTLFSDDVLQFKKIVYEMRFDETTARYGEFGSFFVGHIINTNEFNQFFAIS.

Residues R131, 145-149 (YPMNK), H172, and Q185 each bind Fe-coproporphyrin III. The active site involves Y145.

It belongs to the ChdC family. Type 1 subfamily. Requires Fe-coproporphyrin III as cofactor.

It carries out the reaction Fe-coproporphyrin III + 2 H2O2 + 2 H(+) = heme b + 2 CO2 + 4 H2O. It catalyses the reaction Fe-coproporphyrin III + H2O2 + H(+) = harderoheme III + CO2 + 2 H2O. The catalysed reaction is harderoheme III + H2O2 + H(+) = heme b + CO2 + 2 H2O. It participates in porphyrin-containing compound metabolism; protoheme biosynthesis. In terms of biological role, involved in coproporphyrin-dependent heme b biosynthesis. Catalyzes the decarboxylation of Fe-coproporphyrin III (coproheme) to heme b (protoheme IX), the last step of the pathway. The reaction occurs in a stepwise manner with a three-propionate intermediate. The protein is Coproheme decarboxylase of Staphylococcus aureus (strain MRSA252).